Reading from the N-terminus, the 116-residue chain is Ribulose bisphosphate carboxylase small subunit 1 (116 aa).

This sequence belongs to the RuBisCO small chain family. As to quaternary structure, heterohexadecamer of 8 large and 8 small subunits.

The protein resides in the cytoplasm. Its function is as follows. RuBisCO catalyzes two reactions: the carboxylation of D-ribulose 1,5-bisphosphate, the primary event in carbon dioxide fixation, as well as the oxidative fragmentation of the pentose substrate. Both reactions occur simultaneously and in competition at the same active site. Although the small subunit is not catalytic it is essential for maximal activity. In terms of biological role, can replace the endogenous type I ccbS gene in H.neapolitanus, reconstituting RuBisCO with about 10% of normal activity; the active enzyme is targeted to carboxysomes. The sequence is that of Ribulose bisphosphate carboxylase small subunit 1 from Hydrogenovibrio crunogenus (strain DSM 25203 / XCL-2) (Thiomicrospira crunogena).